A 316-amino-acid chain; its full sequence is Probable cell division protein WhiA (316 aa).

Residues 276–309 (SLEELGKIAEPQITKDAIAGRIRRLLQLAEKTEK) constitute a DNA-binding region (H-T-H motif).

This sequence belongs to the WhiA family.

In terms of biological role, involved in cell division and chromosome segregation. In Bifidobacterium longum subsp. infantis (strain ATCC 15697 / DSM 20088 / JCM 1222 / NCTC 11817 / S12), this protein is Probable cell division protein WhiA.